The chain runs to 126 residues: Holo-[acyl-carrier-protein] synthase (126 aa).

Mg(2+)-binding residues include D8 and E57.

Belongs to the P-Pant transferase superfamily. AcpS family. The cofactor is Mg(2+).

The protein localises to the cytoplasm. The catalysed reaction is apo-[ACP] + CoA = holo-[ACP] + adenosine 3',5'-bisphosphate + H(+). Functionally, transfers the 4'-phosphopantetheine moiety from coenzyme A to a Ser of acyl-carrier-protein. The protein is Holo-[acyl-carrier-protein] synthase of Geobacter sulfurreducens (strain ATCC 51573 / DSM 12127 / PCA).